The sequence spans 403 residues: Phosphopentomutase (403 aa).

Positions 13, 298, 303, 339, 340, and 351 each coordinate Mn(2+).

The protein belongs to the phosphopentomutase family. Mn(2+) is required as a cofactor.

The protein localises to the cytoplasm. The enzyme catalyses 2-deoxy-alpha-D-ribose 1-phosphate = 2-deoxy-D-ribose 5-phosphate. The catalysed reaction is alpha-D-ribose 1-phosphate = D-ribose 5-phosphate. It participates in carbohydrate degradation; 2-deoxy-D-ribose 1-phosphate degradation; D-glyceraldehyde 3-phosphate and acetaldehyde from 2-deoxy-alpha-D-ribose 1-phosphate: step 1/2. Isomerase that catalyzes the conversion of deoxy-ribose 1-phosphate (dRib-1-P) and ribose 1-phosphate (Rib-1-P) to deoxy-ribose 5-phosphate (dRib-5-P) and ribose 5-phosphate (Rib-5-P), respectively. This Streptococcus thermophilus (strain ATCC BAA-250 / LMG 18311) protein is Phosphopentomutase.